We begin with the raw amino-acid sequence, 176 residues long: Sperm-egg fusion protein TMEM95 (176 aa).

Positions 1–16 (MWVLALGGAFLAVAKA) are cleaved as a signal peptide. 4 disulfide bridges follow: Cys17-Cys119, Cys20-Cys122, Cys106-Cys129, and Cys110-Cys135. Residues 17 to 146 (CIFCRLQDHA…PDSHDLWDAR (130 aa)) lie on the Extracellular side of the membrane. 2 N-linked (GlcNAc...) asparagine glycosylation sites follow: Asn36 and Asn118. A helical membrane pass occupies residues 147-167 (ILLLCIFGIVLLSGVVSLQVE). The Cytoplasmic portion of the chain corresponds to 168–176 (YLNLQAKDL).

Belongs to the TMEM95 family. In terms of assembly, does not interact with sperm-egg fusion proteins IZUMO1 or IZUMO1R/JUNO. Post-translationally, N-glycosylated. In terms of tissue distribution, expressed exclusively in testis.

Its subcellular location is the cytoplasmic vesicle. It localises to the secretory vesicle. The protein localises to the acrosome membrane. Functionally, sperm protein required for fusion of sperm with the egg membrane during fertilization. This chain is Sperm-egg fusion protein TMEM95, found in Mus musculus (Mouse).